A 196-amino-acid polypeptide reads, in one-letter code: Imidazoleglycerol-phosphate dehydratase (196 aa).

It belongs to the imidazoleglycerol-phosphate dehydratase family.

Its subcellular location is the cytoplasm. It carries out the reaction D-erythro-1-(imidazol-4-yl)glycerol 3-phosphate = 3-(imidazol-4-yl)-2-oxopropyl phosphate + H2O. It participates in amino-acid biosynthesis; L-histidine biosynthesis; L-histidine from 5-phospho-alpha-D-ribose 1-diphosphate: step 6/9. The chain is Imidazoleglycerol-phosphate dehydratase from Lachnoclostridium phytofermentans (strain ATCC 700394 / DSM 18823 / ISDg) (Clostridium phytofermentans).